The primary structure comprises 200 residues: Integrin beta-1-binding protein 1 (200 aa).

Over residues 1-10 the composition is skewed to basic residues; sequence MFRKGKKRHS. A disordered region spans residues 1-56; the sequence is MFRKGKKRHSSSSSQSSEISTKSKSVDSSLGGLSRSSTVASLDTDSTKSSGQSNNN. Residues 6 to 7 carry the Nuclear localization signal motif; it reads KK. Over residues 11-29 the composition is skewed to low complexity; sequence SSSSQSSEISTKSKSVDSS. Polar residues predominate over residues 34–56; the sequence is SRSSTVASLDTDSTKSSGQSNNN. Threonine 38 is modified (phosphothreonine; by CaMK2). A Phosphoserine modification is found at serine 41. Residues 58-200 form the PID domain; it reads DTCAEFRIKY…FDSVLTSEKP (143 aa). The segment at 136 to 139 is interaction with KRIT1; that stretch reads YLII. The segment at 139 to 141 is interaction with ITGB1; the sequence is IRM.

As to quaternary structure, interacts (via N-terminus and PTB domain) with ROCK1. Found in a complex, at least composed of ITGB1BP1, KRIT1 and RAP1A. Interacts (via C-terminal region) with ITGB1 (via C-terminal cytoplasmic tail); the interaction prevents talin TLN1 binding to ITGB1 and KRIT1 and ITGB1 compete for the same binding site. Interacts with KRIT1 (via N-terminal NPXY motif); the interaction induces the opening conformation of KRIT1 and KRIT1 and ITGB1 compete for the same binding site. Isoform 2 does not interact with ITGB1. Interacts with CDC42 (GTP- or GDP-bound form); the interaction is increased with the CDC42-membrane bound forms and prevents both CDC42 activation and cell spreading. Interacts (via C-terminal domain region) with NME2. Interacts with FERMT2 and RAC1. In terms of processing, phosphorylation at Thr-38 seems to enhance integrin alpha5beta1-mediated cell adhesion. The degree of phosphorylation is regulated by integrin-dependent cell-matrix interaction.

The protein resides in the nucleus. The protein localises to the cytoplasm. It is found in the cytoskeleton. It localises to the cell membrane. Its subcellular location is the cell projection. The protein resides in the lamellipodium. The protein localises to the ruffle. In terms of biological role, key regulator of the integrin-mediated cell-matrix interaction signaling by binding to the ITGB1 cytoplasmic tail and preventing the activation of integrin alpha-5/beta-1 (heterodimer of ITGA5 and ITGB1) by talin or FERMT1. Plays a role in cell proliferation, differentiation, spreading, adhesion and migration in the context of mineralization and bone development and angiogenesis. Stimulates cellular proliferation in a fibronectin-dependent manner. Involved in the regulation of beta-1 integrin-containing focal adhesion (FA) site dynamics by controlling its assembly rate during cell adhesion; inhibits beta-1 integrin clustering within FA by directly competing with talin TLN1, and hence stimulates osteoblast spreading and migration in a fibronectin- and/or collagen-dependent manner. Acts as a guanine nucleotide dissociation inhibitor (GDI) by regulating Rho family GTPases during integrin-mediated cell matrix adhesion; reduces the level of active GTP-bound form of both CDC42 and RAC1 GTPases upon cell adhesion to fibronectin. Stimulates the release of active CDC42 from the membranes to maintain it in an inactive cytoplasmic pool. Participates in the translocation of the Rho-associated protein kinase ROCK1 to membrane ruffles at cell leading edges of the cell membrane, leading to an increase of myoblast cell migration on laminin. Plays a role in bone mineralization at a late stage of osteoblast differentiation; modulates the dynamic formation of focal adhesions into fibrillar adhesions, which are adhesive structures responsible for fibronectin deposition and fibrillogenesis. Plays a role in blood vessel development; acts as a negative regulator of angiogenesis by attenuating endothelial cell proliferation and migration, lumen formation and sprouting angiogenesis by promoting AKT phosphorylation and inhibiting ERK1/2 phosphorylation through activation of the Notch signaling pathway. Promotes transcriptional activity of the MYC promoter. This chain is Integrin beta-1-binding protein 1 (ITGB1BP1), found in Bos taurus (Bovine).